The chain runs to 286 residues: 3-hydroxyanthranilate 3,4-dioxygenase (286 aa).

Residues 1–160 are domain A (catalytic); that stretch reads MERRLGVRAW…SEQYRTGKPI (160 aa). R43 lines the O2 pocket. Fe cation is bound by residues H47, E53, and H91. A substrate-binding site is contributed by E53. Positions 95 and 105 each coordinate substrate. The tract at residues 161–177 is linker; it reads PDQLLKEPPFPLSTRSI. The domain B stretch occupies residues 178–286; the sequence is MEPMSLDAWL…QDPACKKPLG (109 aa).

This sequence belongs to the 3-HAO family. In terms of assembly, monomer. Requires Fe(2+) as cofactor.

It is found in the cytoplasm. It localises to the cytosol. It carries out the reaction 3-hydroxyanthranilate + O2 = (2Z,4Z)-2-amino-3-carboxymuconate 6-semialdehyde. Its pathway is cofactor biosynthesis; NAD(+) biosynthesis; quinolinate from L-kynurenine: step 3/3. Functionally, catalyzes the oxidative ring opening of 3-hydroxyanthranilate to 2-amino-3-carboxymuconate semialdehyde, which spontaneously cyclizes to quinolinate. The polypeptide is 3-hydroxyanthranilate 3,4-dioxygenase (Homo sapiens (Human)).